Here is a 923-residue protein sequence, read N- to C-terminus: Leucine--tRNA ligase (923 aa).

The 'HIGH' region motif lies at 41–52 (PYPSGEGLHVGH). A 'KMSKS' region motif is present at residues 698-702 (KMSKS). Lys701 contributes to the ATP binding site.

The protein belongs to the class-I aminoacyl-tRNA synthetase family.

The protein localises to the cytoplasm. It catalyses the reaction tRNA(Leu) + L-leucine + ATP = L-leucyl-tRNA(Leu) + AMP + diphosphate. This Amoebophilus asiaticus (strain 5a2) protein is Leucine--tRNA ligase.